The primary structure comprises 339 residues: Phenylalanine--tRNA ligase alpha subunit (339 aa).

Glu253 serves as a coordination point for Mg(2+).

The protein belongs to the class-II aminoacyl-tRNA synthetase family. Phe-tRNA synthetase alpha subunit type 1 subfamily. In terms of assembly, tetramer of two alpha and two beta subunits. The cofactor is Mg(2+).

It is found in the cytoplasm. It carries out the reaction tRNA(Phe) + L-phenylalanine + ATP = L-phenylalanyl-tRNA(Phe) + AMP + diphosphate + H(+). This Chromohalobacter salexigens (strain ATCC BAA-138 / DSM 3043 / CIP 106854 / NCIMB 13768 / 1H11) protein is Phenylalanine--tRNA ligase alpha subunit.